Consider the following 297-residue polypeptide: MTLNTQQEAKTTLRRRASTPLPLSSRGHQPGRLCTAPSAPSQHPRLGQSVSLNPPVRKPSPAQDGWSSESSDSEGSWEALYRVVLLGDPGVGKTSLASLFAEKQDRDPHEQLGGVYERTLSVDGEDTTLVVMDTWEAEKLDESWCQESCLQAGSAYVIVYSIADRSSFESASELRIQLRRTHQANHVPIILVGNKADLARCREVSVEEGRACAVVFDCKFIETSATLQHNVTELFEGVVRQLRLRRQDNAAPETPSPRRRASLGQRARRFLARLTARSARRRALKARSKSCHNLAVL.

Residues 1 to 10 (MTLNTQQEAK) show a composition bias toward polar residues. Residues 1 to 73 (MTLNTQQEAK…DGWSSESSDS (73 aa)) form a disordered region. The residue at position 51 (S51) is a Phosphoserine. Residues 64 to 73 (DGWSSESSDS) show a composition bias toward low complexity. Residues 87 to 94 (GDPGVGKT) and 194 to 197 (NKAD) each bind GTP. The tract at residues 267 to 286 (ARRFLARLTARSARRRALKA) is calmodulin-binding.

The protein belongs to the small GTPase superfamily. RGK family. As to quaternary structure, in vitro, interacts with calmodulin in a calcium-dependent manner. Interacts 14-3-3 family members including YWHAE, YWHAH, YWHAQ, YWHAZ in a phosphorylation-dependent manner. In terms of tissue distribution, high expression in cardiac muscle. Moderate expression in lung, skeletal muscle and kidney. Low levels in spleen and brain.

Promotes endothelial cell sprouting and actin cytoskeletal reorganization. May be involved in angiogenesis. May function in Ca(2+) signaling. This Mus musculus (Mouse) protein is GTP-binding protein REM 1 (Rem1).